We begin with the raw amino-acid sequence, 372 residues long: N-acetylneuraminate epimerase 1 (372 aa).

The first 25 residues, 1–25 (MITMKVKNFIYLPFCLFIGTSVAGA), serve as a signal peptide directing secretion. Kelch repeat units follow at residues 44–88 (KIYI…TIID), 90–141 (KIYV…FIHN), 143–177 (HAVS…KVNR), 178–223 (DYFS…IFAE), 226–269 (IYIL…VSGA), 291–340 (EKYS…PWQG), and 342–371 (MLIL…IKIV). E232 (proton acceptor) is an active-site residue.

The protein belongs to the NanM family. In terms of assembly, homodimer.

It localises to the periplasm. The enzyme catalyses N-acetyl-alpha-neuraminate = N-acetyl-beta-neuraminate. Converts alpha-N-acetylneuranimic acid (Neu5Ac) to the beta-anomer, accelerating the equilibrium between the alpha- and beta-anomers. Probably facilitates sialidase-negative bacteria to compete successfully for limited amounts of extracellular Neu5Ac, which is likely taken up in the beta-anomer. In addition, the rapid removal of sialic acid from solution might be advantageous to the bacterium to damp down host responses. This chain is N-acetylneuraminate epimerase 1, found in Escherichia coli O6:H1 (strain CFT073 / ATCC 700928 / UPEC).